Consider the following 308-residue polypeptide: Methionyl-tRNA formyltransferase (308 aa).

(6S)-5,6,7,8-tetrahydrofolate is bound at residue 110-113 (SLLP).

Belongs to the Fmt family.

It catalyses the reaction L-methionyl-tRNA(fMet) + (6R)-10-formyltetrahydrofolate = N-formyl-L-methionyl-tRNA(fMet) + (6S)-5,6,7,8-tetrahydrofolate + H(+). Functionally, attaches a formyl group to the free amino group of methionyl-tRNA(fMet). The formyl group appears to play a dual role in the initiator identity of N-formylmethionyl-tRNA by promoting its recognition by IF2 and preventing the misappropriation of this tRNA by the elongation apparatus. The polypeptide is Methionyl-tRNA formyltransferase (Neisseria meningitidis serogroup B (strain ATCC BAA-335 / MC58)).